Reading from the N-terminus, the 129-residue chain is Glycine cleavage system H protein (129 aa).

The Lipoyl-binding domain maps to 23 to 105; it reads SAVVGITEHA…YGEGWLAKFS (83 aa). Residue Lys-64 is modified to N6-lipoyllysine.

The protein belongs to the GcvH family. In terms of assembly, the glycine cleavage system is composed of four proteins: P, T, L and H. Requires (R)-lipoate as cofactor.

In terms of biological role, the glycine cleavage system catalyzes the degradation of glycine. The H protein shuttles the methylamine group of glycine from the P protein to the T protein. The chain is Glycine cleavage system H protein from Herpetosiphon aurantiacus (strain ATCC 23779 / DSM 785 / 114-95).